The following is a 509-amino-acid chain: Maturase K (509 aa).

Belongs to the intron maturase 2 family. MatK subfamily.

It is found in the plastid. Its subcellular location is the chloroplast. Usually encoded in the trnK tRNA gene intron. Probably assists in splicing its own and other chloroplast group II introns. This Nicotiana glutinosa (Tobacco) protein is Maturase K.